The sequence spans 946 residues: Bifunctional glutamine synthetase adenylyltransferase/adenylyl-removing enzyme (946 aa).

Residues methionine 1 to glutamate 440 form an adenylyl removase region. The interval serine 449–glutamate 946 is adenylyl transferase.

Belongs to the GlnE family. Mg(2+) is required as a cofactor.

It carries out the reaction [glutamine synthetase]-O(4)-(5'-adenylyl)-L-tyrosine + phosphate = [glutamine synthetase]-L-tyrosine + ADP. The catalysed reaction is [glutamine synthetase]-L-tyrosine + ATP = [glutamine synthetase]-O(4)-(5'-adenylyl)-L-tyrosine + diphosphate. Functionally, involved in the regulation of glutamine synthetase GlnA, a key enzyme in the process to assimilate ammonia. When cellular nitrogen levels are high, the C-terminal adenylyl transferase (AT) inactivates GlnA by covalent transfer of an adenylyl group from ATP to specific tyrosine residue of GlnA, thus reducing its activity. Conversely, when nitrogen levels are low, the N-terminal adenylyl removase (AR) activates GlnA by removing the adenylyl group by phosphorolysis, increasing its activity. The regulatory region of GlnE binds the signal transduction protein PII (GlnB) which indicates the nitrogen status of the cell. In Escherichia coli O127:H6 (strain E2348/69 / EPEC), this protein is Bifunctional glutamine synthetase adenylyltransferase/adenylyl-removing enzyme.